The primary structure comprises 374 residues: tRNA-specific 2-thiouridylase MnmA (374 aa).

ATP contacts are provided by residues 13-20 (GMSGGVDS) and M39. Positions 99 to 101 (NPD) are interaction with target base in tRNA. C104 (nucleophile) is an active-site residue. Residues C104 and C201 are joined by a disulfide bond. G128 is an ATP binding site. The tract at residues 151–153 (KDQ) is interaction with tRNA. C201 serves as the catalytic Cysteine persulfide intermediate. The interaction with tRNA stretch occupies residues 313-314 (RY).

It belongs to the MnmA/TRMU family.

It localises to the cytoplasm. The catalysed reaction is S-sulfanyl-L-cysteinyl-[protein] + uridine(34) in tRNA + AH2 + ATP = 2-thiouridine(34) in tRNA + L-cysteinyl-[protein] + A + AMP + diphosphate + H(+). In terms of biological role, catalyzes the 2-thiolation of uridine at the wobble position (U34) of tRNA, leading to the formation of s(2)U34. The chain is tRNA-specific 2-thiouridylase MnmA from Streptococcus suis (strain 98HAH33).